The following is a 305-amino-acid chain: UDP-3-O-acyl-N-acetylglucosamine deacetylase (305 aa).

Residues histidine 79, histidine 238, and aspartate 242 each coordinate Zn(2+). Histidine 265 serves as the catalytic Proton donor.

This sequence belongs to the LpxC family. Zn(2+) is required as a cofactor.

It catalyses the reaction a UDP-3-O-[(3R)-3-hydroxyacyl]-N-acetyl-alpha-D-glucosamine + H2O = a UDP-3-O-[(3R)-3-hydroxyacyl]-alpha-D-glucosamine + acetate. It functions in the pathway glycolipid biosynthesis; lipid IV(A) biosynthesis; lipid IV(A) from (3R)-3-hydroxytetradecanoyl-[acyl-carrier-protein] and UDP-N-acetyl-alpha-D-glucosamine: step 2/6. Functionally, catalyzes the hydrolysis of UDP-3-O-myristoyl-N-acetylglucosamine to form UDP-3-O-myristoylglucosamine and acetate, the committed step in lipid A biosynthesis. This Mannheimia succiniciproducens (strain KCTC 0769BP / MBEL55E) protein is UDP-3-O-acyl-N-acetylglucosamine deacetylase.